A 200-amino-acid polypeptide reads, in one-letter code: Large ribosomal subunit protein uL4 (200 aa).

The interval 38–75 (GRQGSKQQKNRSDVSGGGKRPWRQKGTGRARAGTSRGP) is disordered.

It belongs to the universal ribosomal protein uL4 family. Part of the 50S ribosomal subunit.

Its function is as follows. One of the primary rRNA binding proteins, this protein initially binds near the 5'-end of the 23S rRNA. It is important during the early stages of 50S assembly. It makes multiple contacts with different domains of the 23S rRNA in the assembled 50S subunit and ribosome. Functionally, forms part of the polypeptide exit tunnel. This Azotobacter vinelandii (strain DJ / ATCC BAA-1303) protein is Large ribosomal subunit protein uL4.